Consider the following 316-residue polypeptide: Polyprenyl transferase prhE (316 aa).

9 consecutive transmembrane segments (helical) span residues 45-65 (VVGV…TFLL), 69-89 (VILS…NDLI), 114-134 (GAAL…LLLP), 135-155 (SQCA…PFGK), 163-183 (LILT…DMSP), 188-208 (IPTL…DIVY), 231-253 (ITDQ…GGIL), 257-276 (GFPF…LRFL), and 296-316 (SCLL…CVRL).

This sequence belongs to the UbiA prenyltransferase family. The cofactor is Mg(2+).

The protein localises to the membrane. It carries out the reaction 3,5-dimethylorsellinate + (2E,6E)-farnesyl diphosphate = (3R)-3-farnesyl-6-hydroxy-2,3,5-trimethyl-4-oxocyclohexa-1,5-diene-1-carboxylate + diphosphate + H(+). The protein operates within secondary metabolite biosynthesis; terpenoid biosynthesis. In terms of biological role, polyprenyl transferase; part of the gene cluster that mediates the biosynthesis of paraherquonin, a meroterpenoid with a unique, highly congested hexacyclic molecular architecture. The first step of the pathway is the synthesis of 3,5-dimethylorsellinic acid (DMOA) by the polyketide synthase prhL. Synthesis of DMOA is followed by farnesylation by the prenyltransferase prhE, methylesterification by the methyl-transferase prhM, epoxidation of the prenyl chain by the flavin-dependent monooxygenase prhF, and cyclization of the farnesyl moiety by the terpene cyclase prhH, to yield the tetracyclic intermediate, protoaustinoid A. The short chain dehydrogenase prhI then oxidizes the C-3 alcohol group of the terpene cyclase product to transform protoaustinoid A into protoaustinoid B. The FAD-binding monooxygenase prhJ catalyzes the oxidation of protoaustinoid B into preaustinoid A which is further oxidized into preaustinoid A1 by FAD-binding monooxygenase phrK. Finally, prhA leads to berkeleydione via the berkeleyone B intermediate. PrhA is a multifunctional dioxygenase that first desaturates at C5-C6 to form berkeleyone B, followed by rearrangement of the A/B-ring to form the cycloheptadiene moiety in berkeleydione. Berkeleydione serves as the key intermediate for the biosynthesis of paraherquonin as well as many other meroterpenoids. The cytochrome P450 monooxygenases prhB, prhD, and prhN, as well as the isomerase prhC, are probably involved in the late stage of paraherquonin biosynthesis, after the production of berkeleydione. Especially prhC might be a multifunctional enzyme that catalyzes the D-ring expansion via intramolecular methoxy rearrangement, as well as the hydrolysis of the expanded D-ring. The chain is Polyprenyl transferase prhE from Penicillium brasilianum.